The primary structure comprises 421 residues: Anhydromevalonate phosphate decarboxylase (421 aa).

Mn(2+) contacts are provided by asparagine 131 and glutamate 194. The active-site Proton acceptor is the aspartate 240.

The protein belongs to the UbiD family. The cofactor is prenylated FMN. Requires Mn(2+) as cofactor.

It carries out the reaction (2E)-3-methyl-5-phosphooxypent-2-enoate + H(+) = isopentenyl phosphate + CO2. The protein operates within isoprenoid biosynthesis; isopentenyl diphosphate biosynthesis via mevalonate pathway. Its function is as follows. Catalyzes the conversion of trans-anhydromevalonate 5-phosphate (tAHMP) into isopentenyl phosphate. Involved in the archaeal mevalonate (MVA) pathway, which provides fundamental precursors for isoprenoid biosynthesis, such as isopentenyl diphosphate (IPP) and dimethylallyl diphosphate (DMAPP). This is Anhydromevalonate phosphate decarboxylase from Methanocaldococcus jannaschii (strain ATCC 43067 / DSM 2661 / JAL-1 / JCM 10045 / NBRC 100440) (Methanococcus jannaschii).